The sequence spans 351 residues: Dihydroorotate dehydrogenase (quinone) (351 aa).

Residues Ala61 to Lys65 and Thr85 contribute to the FMN site. Lys65 provides a ligand contact to substrate. A substrate-binding site is contributed by Asn110–Phe114. Residues Asn139 and Asn172 each contribute to the FMN site. Substrate is bound at residue Asn172. Ser175 acts as the Nucleophile in catalysis. Asn177 lines the substrate pocket. Residues Lys217 and Thr245 each coordinate FMN. Position 246 to 247 (Asn246 to Thr247) interacts with substrate. Residues Gly268, Gly297, and Tyr318–Ser319 each bind FMN.

It belongs to the dihydroorotate dehydrogenase family. Type 2 subfamily. In terms of assembly, monomer. It depends on FMN as a cofactor.

The protein resides in the cell membrane. The catalysed reaction is (S)-dihydroorotate + a quinone = orotate + a quinol. Its pathway is pyrimidine metabolism; UMP biosynthesis via de novo pathway; orotate from (S)-dihydroorotate (quinone route): step 1/1. Catalyzes the conversion of dihydroorotate to orotate with quinone as electron acceptor. This chain is Dihydroorotate dehydrogenase (quinone), found in Xanthomonas campestris pv. campestris (strain 8004).